We begin with the raw amino-acid sequence, 220 residues long: GTP-binding protein YPT53 (220 aa).

GTP-binding positions include 19-26 (GESAVGKS), 67-71 (DTAGQ), and 125-128 (NKMD). 2 S-geranylgeranyl cysteine lipidation sites follow: cysteine 218 and cysteine 220. Position 220 is a cysteine methyl ester (cysteine 220).

It belongs to the small GTPase superfamily. Rab family.

It is found in the cell membrane. Functionally, required for transport in the endocytic pathway and for correct sorting of the vacuolar hydrolases suggesting a possible intersection of the endocytic with the vacuolar sorting pathway. May be involved in recruiting the MON1-CCZ1 complex to membranes enriched in phosphatidylinositol 3-phosphate (PtdIns[3]P) or other charged lipids, leading to recruitment of YPT7. The sequence is that of GTP-binding protein YPT53 (YPT53) from Saccharomyces cerevisiae (strain ATCC 204508 / S288c) (Baker's yeast).